The following is a 273-amino-acid chain: Diphthine methyl ester synthase (273 aa).

S-adenosyl-L-methionine contacts are provided by residues L10, D87, G90, 115 to 116 (SI), L166, V224, and H249.

This sequence belongs to the diphthine synthase family.

It catalyses the reaction 2-[(3S)-amino-3-carboxypropyl]-L-histidyl-[translation elongation factor 2] + 4 S-adenosyl-L-methionine = diphthine methyl ester-[translation elongation factor 2] + 4 S-adenosyl-L-homocysteine + 3 H(+). It participates in protein modification; peptidyl-diphthamide biosynthesis. In terms of biological role, S-adenosyl-L-methionine-dependent methyltransferase that catalyzes four methylations of the modified target histidine residue in translation elongation factor 2 (EF-2), to form an intermediate called diphthine methyl ester. The four successive methylation reactions represent the second step of diphthamide biosynthesis. The sequence is that of Diphthine methyl ester synthase (dph5) from Dictyostelium discoideum (Social amoeba).